The following is a 75-amino-acid chain: Phi-liotoxin-Lw1a (75 aa).

An N-terminal signal peptide occupies residues M1–G25. Positions D26–R39 are excised as a propeptide. Disulfide bonds link C50–C62 and C56–C68.

As to expression, expressed by the venom gland.

It is found in the secreted. In terms of biological role, affects the activity of both ryanodine-sensitive calcium-release channels RyR1 and RyR2 with high potency. At lower concentrations the toxin increases full openings of the RyRs, and at higher concentrations it inhibits full openings and induce openings to subconductance levels and reduces the number of full conductance openings. The different actions may be attributed to the toxins binding at different sites on the RyRs, with binding at a high-affinity site mediating the increase in full openings and the induction of subconductance states evoked upon binding to a lower-affinity site. Insect-selective toxin that provokes a dose-dependent contractile paralysis in crickets and blowfly larvae, followed by death. The chain is Phi-liotoxin-Lw1a from Hormurus waigiensis (Australian rainforest scorpion).